The chain runs to 146 residues: Hemoglobin subunit beta-2 (146 aa).

Positions 2-146 constitute a Globin domain; that stretch reads FLSAEEKGLV…VASALAHRYH (145 aa). Lysine 17 is modified (N6-succinyllysine). Phosphoserine is present on residues serine 44 and serine 50. Lysine 59 is modified (N6-succinyllysine). Heme b-binding residues include histidine 63 and histidine 92. Asymmetric dimethylarginine is present on arginine 104.

This sequence belongs to the globin family. Heterotetramer of two alpha chains and two beta chains. Red blood cells.

Its function is as follows. Involved in oxygen transport from the lung to the various peripheral tissues. This Panthera pardus saxicolor (Northern Persian leopard) protein is Hemoglobin subunit beta-2 (HBB2).